We begin with the raw amino-acid sequence, 303 residues long: Elongation factor Ts (303 aa).

The interval 81–84 (TDFV) is involved in Mg(2+) ion dislocation from EF-Tu.

This sequence belongs to the EF-Ts family.

The protein localises to the cytoplasm. Associates with the EF-Tu.GDP complex and induces the exchange of GDP to GTP. It remains bound to the aminoacyl-tRNA.EF-Tu.GTP complex up to the GTP hydrolysis stage on the ribosome. The polypeptide is Elongation factor Ts (Mesomycoplasma hyopneumoniae (strain 232) (Mycoplasma hyopneumoniae)).